A 218-amino-acid chain; its full sequence is Small ribosomal subunit protein uS3 (218 aa).

One can recognise a KH type-2 domain in the interval 38–106 (IRKFIATKLA…RVHINIVEIK (69 aa)).

Belongs to the universal ribosomal protein uS3 family. As to quaternary structure, part of the 30S ribosomal subunit. Forms a tight complex with proteins S10 and S14.

Its function is as follows. Binds the lower part of the 30S subunit head. Binds mRNA in the 70S ribosome, positioning it for translation. This is Small ribosomal subunit protein uS3 from Enterococcus faecalis (strain ATCC 700802 / V583).